A 53-amino-acid chain; its full sequence is UPF0391 membrane protein Bmul_5473/BMULJ_06024 (53 aa).

The next 2 helical transmembrane spans lie at 5–25 and 30–50; these read ALIF…GIAA and IAKI…LLGV.

Belongs to the UPF0391 family.

It is found in the cell membrane. The chain is UPF0391 membrane protein Bmul_5473/BMULJ_06024 from Burkholderia multivorans (strain ATCC 17616 / 249).